The primary structure comprises 154 residues: Myoglobin (154 aa).

In terms of domain architecture, Globin spans 2-148 (GLSDGEWQLV…FRNDIAAKYK (147 aa)). A Phosphoserine modification is found at S4. Nitrite is bound at residue H65. H65 lines the O2 pocket. T68 is modified (phosphothreonine). H94 is a heme b binding site.

This sequence belongs to the globin family. In terms of assembly, monomeric.

Its subcellular location is the cytoplasm. It is found in the sarcoplasm. It catalyses the reaction Fe(III)-heme b-[protein] + nitric oxide + H2O = Fe(II)-heme b-[protein] + nitrite + 2 H(+). The enzyme catalyses H2O2 + AH2 = A + 2 H2O. In terms of biological role, monomeric heme protein which primary function is to store oxygen and facilitate its diffusion within muscle tissues. Reversibly binds oxygen through a pentacoordinated heme iron and enables its timely and efficient release as needed during periods of heightened demand. Depending on the oxidative conditions of tissues and cells, and in addition to its ability to bind oxygen, it also has a nitrite reductase activity whereby it regulates the production of bioactive nitric oxide. Under stress conditions, like hypoxia and anoxia, it also protects cells against reactive oxygen species thanks to its pseudoperoxidase activity. The sequence is that of Myoglobin (MB) from Tupaia glis (Common tree shrew).